Here is a 174-residue protein sequence, read N- to C-terminus: MGKITFYEDRGFQGRCYECSSDCPNLQTYFSRCNSIRVDSGCWMLYERPNYQGYQYFLRRGDYPDYQQWMGFSDSIRSCRSIPYTSSHRIRLYERDDYRGLVSELTEDCSCIHDRFRLNEIYSMHVLEGSWVLYEMPNYRGRQYLLRPGDYRRYHDWGAMDAKVGSLRRVMDLY.

2 consecutive Beta/gamma crystallin 'Greek key' domains span residues 2-40 (GKIT…RVDS) and 41-83 (GCWM…RSIP). The interval 84–87 (YTSS) is connecting peptide. Beta/gamma crystallin 'Greek key' domains follow at residues 88–128 (HRIR…HVLE) and 129–171 (GSWV…RRVM).

Belongs to the beta/gamma-crystallin family.

In terms of biological role, crystallins are the dominant structural components of the vertebrate eye lens. The chain is Gamma-crystallin A (Cryga) from Rattus norvegicus (Rat).